Here is a 535-residue protein sequence, read N- to C-terminus: Flavin-containing monooxygenase iboF (535 aa).

Positions 1-24 are cleaved as a signal peptide; the sequence is MFSLRPTALVSLSVVLFSIQETLS. Residue 60 to 65 coordinates FAD; the sequence is GAGPSG. Asn-134, Asn-243, and Asn-300 each carry an N-linked (GlcNAc...) asparagine glycan. An NADP(+)-binding site is contributed by 307–312; sequence GAAASG. 3 N-linked (GlcNAc...) asparagine glycosylation sites follow: Asn-356, Asn-382, and Asn-410.

Belongs to the FMO family. FAD serves as cofactor.

The protein operates within secondary metabolite biosynthesis. Flavin-containing monooxygenase; part of the gene cluster that mediates the biosynthesis of the psychoactive metabolites ibotenic acid and muscimol. The first committed step is glutamate hydroxylation by the 2-oxoglutarate-dependent dioxygenase iboH, and the last step is decarboxylation of ibotenic acid to muscimol by the decarboxylase iboD. The order of the intermediate reactions is somewhat ambiguous. IboA likely activates the carboxylic acid at position 5 to introduce an amide bond, and the flavin monooxygenase iboF generates the N-O bond. There are several options for the latter step. One option is that iboF directly hydroxylates the amide nitrogen formed by iboA to produce a hydroxamic acid species. Another option is that iboF hydroxylates an external N-containing compound, whose resulting N-O bond is subsequently introduced into the hydroxyglutamate scaffold. The paralogous PLP-dependent cystathionine gamma-synthase-like enzymes iboG1 and iboG2 are likely involved in substitution of the OH group at position 3 by the O-N moiety. The first cyclic intermediate is most probably tricholomic acid which is likely desaturated to ibotenic acid by the cytochrome P450 monooxygenase iboC. This is Flavin-containing monooxygenase iboF from Amanita muscaria (strain Koide BX008).